Consider the following 444-residue polypeptide: D(2) dopamine receptor (444 aa).

Residues 1–37 lie on the Extracellular side of the membrane; sequence MDPLNLSWYDDDLERQNWSRPFNGSEGKPDRPHYNYY. 3 N-linked (GlcNAc...) asparagine glycosylation sites follow: asparagine 5, asparagine 17, and asparagine 23. The chain crosses the membrane as a helical span at residues 38-60; sequence AMLLTLLIFIIVFGNVLVCMAVS. The Cytoplasmic segment spans residues 61 to 70; the sequence is REKALQTTTN. The chain crosses the membrane as a helical span at residues 71–93; that stretch reads YLIVSLAVADLLVATLVMPWVVY. At 94 to 108 the chain is on the extracellular side; that stretch reads LEVVGEWKFSRIHCD. The cysteines at positions 107 and 182 are disulfide-linked. The chain crosses the membrane as a helical span at residues 109-130; the sequence is IFVTLDVMMCTASILNLCAISI. The Cytoplasmic portion of the chain corresponds to 131–151; sequence DRYTAVAMPMLYNTRYSSKRR. The chain crosses the membrane as a helical span at residues 152–172; that stretch reads VTVMIAIVWVLSFTISCPLLF. At 173-188 the chain is on the extracellular side; that stretch reads GLNNTDQNECIIANPA. Residues 189-213 traverse the membrane as a helical segment; it reads FVVYSSIVSFYVPFIVTLLVYIKIY. An interaction with PPP1R9B region spans residues 211-374; the sequence is KIYIVLRKRR…SQQKEKKATQ (164 aa). The Cytoplasmic portion of the chain corresponds to 214 to 374; sequence IVLRKRRKRV…SQQKEKKATQ (161 aa). The interval 282 to 329 is disordered; the sequence is EMLSSTSPPERTRYSPIPPSHHQLTLPDPSHHGLHSNPDSPAKPEKNG. Residues 375-396 form a helical membrane-spanning segment; sequence MLAIVLGVFIICWLPFFITHIL. At 397–410 the chain is on the extracellular side; the sequence is NIHCDCNIPPVLYS. An intrachain disulfide couples cysteine 400 to cysteine 402. The helical transmembrane segment at 411-432 threads the bilayer; that stretch reads AFTWLGYVNSAVNPIIYTTFNI. Topologically, residues 433-444 are cytoplasmic; that stretch reads EFRKAFMKILHC. The S-palmitoyl cysteine moiety is linked to residue cysteine 444.

Belongs to the G-protein coupled receptor 1 family. As to quaternary structure, forms homo- and heterooligomers with DRD4. The interaction with DRD4 may modulate agonist-induced downstream signaling. Interacts with CADPS and CADPS2. Interacts with GPRASP1, PPP1R9B and CLIC6. Interacts with ARRB2. Interacts with HTR2A. Interacts with DRD1. Interacts with KCNA2. Palmitoylated. Palmitoylation which is required for proper localization to the plasma membrane and stability of the receptor could be carried on by ZDHHC4, ZDHHC3 and ZDHHC8. Expressed in retinal hyaloid vessels at postnatal day 6. As to expression, expressed in the pituitary gland, stratum, brain stem and cortex. In terms of tissue distribution, expressed in the brain stem.

The protein localises to the cell membrane. It is found in the golgi apparatus membrane. Its function is as follows. Dopamine receptor whose activity is mediated by G proteins which inhibit adenylyl cyclase. Positively regulates postnatal regression of retinal hyaloid vessels via suppression of VEGFR2/KDR activity, downstream of OPN5. The protein is D(2) dopamine receptor (Drd2) of Mus musculus (Mouse).